Consider the following 66-residue polypeptide: Period circadian protein (66 aa).

The disordered stretch occupies residues 1 to 66 (EGSGGSGSSG…VTLTESLLNK (66 aa)). The segment covering 9-31 (SGNFTTGSNIHMSSVTNTSNAGT) has biased composition (low complexity). 4 tandem repeats follow at residues 30 to 31 (GT), 32 to 33 (GT), 35 to 36 (GT), and 37 to 38 (GN). The 4 X 2 AA tandem repeats of G-[TN] stretch occupies residues 30–53 (GTGTSGTGNSGGGSGGGTGPGSGA). The span at 32–51 (GTSGTGNSGGGSGGGTGPGS) shows a compositional bias: gly residues.

Forms a heterodimer with timeless (TIM); the complex then translocates into the nucleus. Phosphorylated with a circadian rhythmicity, probably by the double-time protein (dbt). Phosphorylation could be implicated in the stability of per monomer and in the formation of heterodimer per-tim.

The protein resides in the nucleus. Its subcellular location is the cytoplasm. It is found in the perinuclear region. Essential for biological clock functions. Determines the period length of circadian and ultradian rhythms; an increase in PER dosage leads to shortened circadian rhythms and a decrease leads to lengthened circadian rhythms. Essential for the circadian rhythmicity of locomotor activity, eclosion behavior, and for the rhythmic component of the male courtship song that originates in the thoracic nervous system. The biological cycle depends on the rhythmic formation and nuclear localization of the TIM-PER complex. Light induces the degradation of TIM, which promotes elimination of PER. Nuclear activity of the heterodimer coordinatively regulates PER and TIM transcription through a negative feedback loop. Behaves as a negative element in circadian transcriptional loop. Does not appear to bind DNA, suggesting indirect transcriptional inhibition. This Drosophila saltans (Fruit fly) protein is Period circadian protein (per).